The sequence spans 315 residues: Protoheme IX farnesyltransferase (315 aa).

The next 9 membrane-spanning stretches (helical) occupy residues 34 to 54 (VISLVVFTGAAGLAMAPGPIN), 55 to 75 (PLIAAVSILCICMASGAAGAI), 105 to 125 (ALGFGIGLSVASVLLMWLAAN), 127 to 147 (LAAFILAFSIFFYAVIYTMWL), 155 to 175 (IVIGGAAGAFPPMIGWAATTG), 177 to 197 (LGVLPVVMFAIVFLWTPPHFW), 226 to 246 (WQILFYTLILSAVSLVPSFLH), 251 to 271 (LYTGVASLLDAGFVACAVGVL), and 294 to 314 (YSLAYLFLLFCGLLADHFLIM).

The protein belongs to the UbiA prenyltransferase family. Protoheme IX farnesyltransferase subfamily.

It is found in the cell inner membrane. It catalyses the reaction heme b + (2E,6E)-farnesyl diphosphate + H2O = Fe(II)-heme o + diphosphate. The protein operates within porphyrin-containing compound metabolism; heme O biosynthesis; heme O from protoheme: step 1/1. Its function is as follows. Converts heme B (protoheme IX) to heme O by substitution of the vinyl group on carbon 2 of heme B porphyrin ring with a hydroxyethyl farnesyl side group. The polypeptide is Protoheme IX farnesyltransferase (Gluconacetobacter diazotrophicus (strain ATCC 49037 / DSM 5601 / CCUG 37298 / CIP 103539 / LMG 7603 / PAl5)).